The primary structure comprises 448 residues: Exodeoxyribonuclease 7 large subunit (448 aa).

Belongs to the XseA family. In terms of assembly, heterooligomer composed of large and small subunits.

Its subcellular location is the cytoplasm. It catalyses the reaction Exonucleolytic cleavage in either 5'- to 3'- or 3'- to 5'-direction to yield nucleoside 5'-phosphates.. Functionally, bidirectionally degrades single-stranded DNA into large acid-insoluble oligonucleotides, which are then degraded further into small acid-soluble oligonucleotides. The chain is Exodeoxyribonuclease 7 large subunit from Shewanella baltica (strain OS223).